A 93-amino-acid chain; its full sequence is DNA-binding protein HB1 (93 aa).

It belongs to the bacterial histone-like protein family. In terms of assembly, homodimer.

Functionally, histone-like DNA-binding protein which is capable of wrapping DNA to stabilize it, and thus to prevent its denaturation under extreme environmental conditions. This chain is DNA-binding protein HB1 (hup), found in Bifidobacterium longum (strain NCC 2705).